We begin with the raw amino-acid sequence, 406 residues long: Argininosuccinate synthase (406 aa).

ATP is bound at residue 8–16 (AYSGGLDTS). Tyrosine 86 is a binding site for L-citrulline. Position 116 (glycine 116) interacts with ATP. L-aspartate contacts are provided by threonine 118, asparagine 122, and aspartate 123. L-citrulline is bound at residue asparagine 122. The L-citrulline site is built by arginine 126, serine 174, serine 183, glutamate 259, and tyrosine 271.

The protein belongs to the argininosuccinate synthase family. Type 1 subfamily. In terms of assembly, homotetramer.

The protein localises to the cytoplasm. The enzyme catalyses L-citrulline + L-aspartate + ATP = 2-(N(omega)-L-arginino)succinate + AMP + diphosphate + H(+). Its pathway is amino-acid biosynthesis; L-arginine biosynthesis; L-arginine from L-ornithine and carbamoyl phosphate: step 2/3. This Dehalococcoides mccartyi (strain ATCC BAA-2266 / KCTC 15142 / 195) (Dehalococcoides ethenogenes (strain 195)) protein is Argininosuccinate synthase.